The following is a 289-amino-acid chain: NFU1 iron-sulfur cluster scaffold homolog, mitochondrial (289 aa).

A mitochondrion-targeting transit peptide spans 1-56 (MAKLISYAKGGFLRNTRLTSRAVPQVYQHATSSRGFVHLTSSVAQSSAIHVSTPST). The segment at 183–251 (IKELLDTRIR…IPEVESVEQV (69 aa)) is nifU. Positions 220 and 223 each coordinate [4Fe-4S] cluster. A disordered region spans residues 267–289 (ERNLKQKDTSSTAPVGIGGGPAN).

The protein belongs to the NifU family.

It localises to the mitochondrion. Molecular scaffold for [Fe-S] cluster assembly of mitochondrial iron-sulfur proteins. The protein is NFU1 iron-sulfur cluster scaffold homolog, mitochondrial of Drosophila willistoni (Fruit fly).